A 364-amino-acid chain; its full sequence is Aminomethyltransferase (364 aa).

It belongs to the GcvT family. The glycine cleavage system is composed of four proteins: P, T, L and H.

The catalysed reaction is N(6)-[(R)-S(8)-aminomethyldihydrolipoyl]-L-lysyl-[protein] + (6S)-5,6,7,8-tetrahydrofolate = N(6)-[(R)-dihydrolipoyl]-L-lysyl-[protein] + (6R)-5,10-methylene-5,6,7,8-tetrahydrofolate + NH4(+). The glycine cleavage system catalyzes the degradation of glycine. The polypeptide is Aminomethyltransferase (Shigella flexneri serotype 5b (strain 8401)).